We begin with the raw amino-acid sequence, 279 residues long: Tryptophan 2,3-dioxygenase (279 aa).

Residues 48–52 (FIVIH), Tyr110, and Arg114 contribute to the substrate site. Position 237 (His237) interacts with heme. Residue Thr251 coordinates substrate.

It belongs to the tryptophan 2,3-dioxygenase family. As to quaternary structure, homotetramer. The cofactor is heme.

It catalyses the reaction L-tryptophan + O2 = N-formyl-L-kynurenine. It participates in amino-acid degradation; L-tryptophan degradation via kynurenine pathway; L-kynurenine from L-tryptophan: step 1/2. Its function is as follows. Heme-dependent dioxygenase that catalyzes the oxidative cleavage of the L-tryptophan (L-Trp) pyrrole ring and converts L-tryptophan to N-formyl-L-kynurenine. Catalyzes the oxidative cleavage of the indole moiety. This is Tryptophan 2,3-dioxygenase from Bacillus cereus (strain ZK / E33L).